Consider the following 146-residue polypeptide: MADLFFGGPFRRILYGRPFPPDWASASATAAMDWVETPTSHVLRINVPGLGKDDVKVQVEDGNVLTVRGAAPHAAAEKEREREKDVVWHVAERGRPEFAREVALPAEVRVEQIRASVDNGVLTVVVPKEPAPARPRTRPIAVSSKL.

In terms of domain architecture, sHSP spans 23 to 143; the sequence is WASASATAAM…RPRTRPIAVS (121 aa). The Microbody targeting signal signature appears at 144–146; it reads SKL.

This sequence belongs to the small heat shock protein (HSP20) family. As to quaternary structure, may form oligomeric structures.

It localises to the peroxisome. The chain is 16.0 kDa heat shock protein, peroxisomal (HSP16.0) from Oryza sativa subsp. japonica (Rice).